Reading from the N-terminus, the 930-residue chain is MKLKDTLNLGKTAFPMRAGLPTKEPVWQKEWEDAKLYQRRQELNEGKPHFVLHDGPPYANGNIHVGHAMNHISKDIIIRSKSMSGFNAPYIPGWDTHGLPIEQVLAKQGVKRKEMDLVEYLKLCREYALSQVYKQRDDFKRLGMSGDWENLYVTLTPDYEAAQIRVFGEMANKGYIYRGAKPVYWSWSSESALAEAEIEYHDLVSTSLYYANKVKDGKGILDTDTYIVVWTTTPFTITASRGLTVGADIDYVLVQPASETRKFVVAAELLTSLSEKFGWADVQVLATYRGQELNHIVTEHPWDTAVDELVILGDHVTTDSGTGIVHTAPGFGEDDYNVGIANGLEVAVTVDERGIMMANAGPEFEGQFYDKVVPTVIEKLGNLLLAQEEISHSYPFDWRTKKPIIWRAVPQWFASVSKFRQEILDAIDKVKFHTEWGKVRLYNMIRDRGDWVISRQRAWGVPLPIFYAEDGTAIMTAETIEHVAQLFEVHGSSIWWERDAKDLLPEGFTHPGSPNGEFKKETDIMDVWFDSGSSWNGVLVNRPNLTYPADLYLEGSDQYRGWFNSSLITSVANHGVAPYKQILSQGFTLDGKGEKMSKSLGNTIAPSDVEKQFGAEILRLWVTSVDSSNDVRISMDILSQVSETYRKIRNTLRFLIANTSDFNPAQDVVAYDELRSVDKYMTIRFNQLVKTIRDAYADFEFLTIYKALVNFINVDLSAFYLDFAKDVVYIEGAKSLERRQMQTVFYDILVKITKLLTPILPHTAEEIWSYLEFEAEDFVQLSELPEAQTFANQEEVLDTWAAFMDFRGQAQKALEEARNAKVIGKSLEAHLTVYPNEVVKTLLEAVNSNVAQLLIVSDLTIAEGPAPEAALSFEDVAFTVERAAGQVCDRCRRIDPTTAERSYQAVICDHCASIVEENFAEAVAEGFEEK.

The 'HIGH' region signature appears at 57–67 (PYANGNIHVGH). Glutamate 554 is a binding site for L-isoleucyl-5'-AMP. The 'KMSKS' region motif lies at 595–599 (KMSKS). Lysine 598 is a binding site for ATP. 4 residues coordinate Zn(2+): cysteine 888, cysteine 891, cysteine 908, and cysteine 911.

This sequence belongs to the class-I aminoacyl-tRNA synthetase family. IleS type 1 subfamily. Monomer. It depends on Zn(2+) as a cofactor.

Its subcellular location is the cytoplasm. It catalyses the reaction tRNA(Ile) + L-isoleucine + ATP = L-isoleucyl-tRNA(Ile) + AMP + diphosphate. Its function is as follows. Catalyzes the attachment of isoleucine to tRNA(Ile). As IleRS can inadvertently accommodate and process structurally similar amino acids such as valine, to avoid such errors it has two additional distinct tRNA(Ile)-dependent editing activities. One activity is designated as 'pretransfer' editing and involves the hydrolysis of activated Val-AMP. The other activity is designated 'posttransfer' editing and involves deacylation of mischarged Val-tRNA(Ile). The protein is Isoleucine--tRNA ligase of Streptococcus pneumoniae (strain ATCC 700669 / Spain 23F-1).